The chain runs to 396 residues: 8-amino-7-oxononanoate synthase (396 aa).

Arg-21 is a binding site for substrate. 108-109 (GY) is a pyridoxal 5'-phosphate binding site. His-133 is a substrate binding site. Pyridoxal 5'-phosphate contacts are provided by Ser-179, His-207, and Thr-236. N6-(pyridoxal phosphate)lysine is present on Lys-239. Residue Thr-353 participates in substrate binding.

It belongs to the class-II pyridoxal-phosphate-dependent aminotransferase family. BioF subfamily. Homodimer. It depends on pyridoxal 5'-phosphate as a cofactor.

The catalysed reaction is 6-carboxyhexanoyl-[ACP] + L-alanine + H(+) = (8S)-8-amino-7-oxononanoate + holo-[ACP] + CO2. The protein operates within cofactor biosynthesis; biotin biosynthesis. Catalyzes the decarboxylative condensation of pimeloyl-[acyl-carrier protein] and L-alanine to produce 8-amino-7-oxononanoate (AON), [acyl-carrier protein], and carbon dioxide. The sequence is that of 8-amino-7-oxononanoate synthase from Hahella chejuensis (strain KCTC 2396).